We begin with the raw amino-acid sequence, 235 residues long: H2HPP isomerase (235 aa).

Cupin type-2 domains are found at residues 41 to 106 (VPPH…AIDI) and 151 to 216 (KIPG…KSIN). A divalent metal cation is bound by residues histidine 50, histidine 52, glutamine 56, histidine 91, histidine 162, histidine 164, glutamine 168, and histidine 202. Tyrosine 223 is a binding site for substrate.

As to quaternary structure, monomer. Fe(2+) serves as cofactor. The cofactor is Co(2+).

It localises to the cytoplasm. The enzyme catalyses 3-[(4R)-4-hydroxycyclohexa-1,5-dien-1-yl]-2-oxopropanoate = 3-[(1E,4R)-4-hydroxycyclohex-2-en-1-ylidene]pyruvate. Its pathway is antibiotic biosynthesis; bacilysin biosynthesis. Part of the bacABCDEF operon responsible for the biosynthesis of the nonribosomally synthesized dipeptide antibiotic bacilysin, composed of L-alanine and L-anticapsin. Bacilysin is an irreversible inactivator of the glutaminase domain of glucosamine synthetase. BacB catalyzes the allylic isomerization of the endocyclic-delta(4),delta(8)-7R-dihydro-hydroxyphenylpyruvate (en-H2HPP) to generate a mixture of 3E,7R- and 3Z, 7R-olefins (E/Z ration of 3/1) of the exocyclic-delta(3),delta(5)-dihydro-hydroxyphenylpyruvate (ex-H2HPP). This Bacillus subtilis (strain 168) protein is H2HPP isomerase.